A 515-amino-acid chain; its full sequence is Probable cytochrome P450 6d4 (515 aa).

Position 457 (C457) interacts with heme.

Belongs to the cytochrome P450 family. Heme is required as a cofactor.

The protein localises to the endoplasmic reticulum membrane. It is found in the microsome membrane. May be involved in the metabolism of insect hormones and in the breakdown of synthetic insecticides. The chain is Probable cytochrome P450 6d4 (Cyp6d4) from Drosophila melanogaster (Fruit fly).